Here is an 889-residue protein sequence, read N- to C-terminus: Mitochondrial intermediate peptidase (889 aa).

The transit peptide at 1–30 (MASTSKNAQRAAASVAHSYHVCLARRMSRL) directs the protein to the mitochondrion. Residues 60–112 (SSSLAAQRVQRPTSAGPILTNPISDHEKDNDELRSLFDAPPTSSSANHLRSSG) form a disordered region. A compositionally biased stretch (basic and acidic residues) spans 83-94 (SDHEKDNDELRS). Polar residues predominate over residues 100–112 (PTSSSANHLRSSG). His-670 provides a ligand contact to Zn(2+). Glu-671 is an active-site residue. Zn(2+)-binding residues include His-674 and His-677.

The protein belongs to the peptidase M3 family. Zn(2+) serves as cofactor.

The protein resides in the mitochondrion matrix. The catalysed reaction is Release of an N-terminal octapeptide as second stage of processing of some proteins imported into the mitochondrion.. Its function is as follows. Cleaves proteins, imported into the mitochondrion, to their mature size. While most mitochondrial precursor proteins are processed to the mature form in one step by mitochondrial processing peptidase (MPP), the sequential cleavage by MIP of an octapeptide after initial processing by MPP is a required step for a subgroup of nuclear-encoded precursor proteins destined for the matrix or the inner membrane. This chain is Mitochondrial intermediate peptidase (OCT1), found in Mycosarcoma maydis (Corn smut fungus).